The chain runs to 151 residues: Small ribosomal subunit protein uS15 (151 aa).

Belongs to the universal ribosomal protein uS15 family. In terms of assembly, component of the small ribosomal subunit. Mature ribosomes consist of a small (40S) and a large (60S) subunit. The 40S subunit contains about 32 different proteins and 1 molecule of RNA (18S). The 60S subunit contains 45 different proteins and 3 molecules of RNA (25S, 5.8S and 5S).

The protein localises to the cytoplasm. Component of the ribosome, a large ribonucleoprotein complex responsible for the synthesis of proteins in the cell. The small ribosomal subunit (SSU) binds messenger RNAs (mRNAs) and translates the encoded message by selecting cognate aminoacyl-transfer RNA (tRNA) molecules. The large subunit (LSU) contains the ribosomal catalytic site termed the peptidyl transferase center (PTC), which catalyzes the formation of peptide bonds, thereby polymerizing the amino acids delivered by tRNAs into a polypeptide chain. The nascent polypeptides leave the ribosome through a tunnel in the LSU and interact with protein factors that function in enzymatic processing, targeting, and the membrane insertion of nascent chains at the exit of the ribosomal tunnel. In Candida albicans (strain SC5314 / ATCC MYA-2876) (Yeast), this protein is Small ribosomal subunit protein uS15 (RPS13).